Consider the following 592-residue polypeptide: Testis-specific serine kinase substrate (592 aa).

Position 217 is a phosphoserine (serine 217). A disordered region spans residues 232–308; that stretch reads QDETPRRQEA…VPAGWGMGPR (77 aa). Residues 234-264 show a composition bias toward basic and acidic residues; sequence ETPRRQEAELQEPEEKQEPEEKQEPEEKQKP. Residues 269–281 show a composition bias toward polar residues; that stretch reads SWNSLGPAATSQG. A Phosphoserine; by TSSK1 and TSSK2 modification is found at serine 288. Position 316 is a phosphoserine (serine 316). The tract at residues 566 to 592 is disordered; the sequence is LEGSTGTMGGGSSAGTPPKQGGSAPEQ.

Phosphorylated on serine residue(s) by STK22A/TSSK1 and STK22B/TSSK2. In terms of tissue distribution, highly expressed in testis. Expressed at low levels in prostate, female breast, placenta, ovary and thymus.

Its subcellular location is the cytoplasm. The protein localises to the cytoskeleton. It localises to the microtubule organizing center. It is found in the centrosome. The protein resides in the centriole. In terms of biological role, may play a role in testicular physiology, most probably in the process of spermatogenesis or spermatid development. The sequence is that of Testis-specific serine kinase substrate (TSKS) from Homo sapiens (Human).